The primary structure comprises 142 residues: Putative pre-16S rRNA nuclease (142 aa).

This sequence belongs to the YqgF nuclease family.

It localises to the cytoplasm. Functionally, could be a nuclease involved in processing of the 5'-end of pre-16S rRNA. This is Putative pre-16S rRNA nuclease from Mycoplasmoides gallisepticum (strain R(low / passage 15 / clone 2)) (Mycoplasma gallisepticum).